Consider the following 232-residue polypeptide: MSVHKTNDAFKVLMNSAKEPIVEDIPKKYRKQSFRDNLKVYIESPESYKNVIYYDDDVVLVRDMFPKSKMHLLLMTRDPHLTHVHPLEIMMKHRSLVEKLVSYVQGDLSGLIFDEARNCLSQQLTNEALCNYIKVGFHAGPSMNNLHLHIMTLDHVSPSLKNSAHYISFTSPFFVKIDTPTSNLPTRGTLTSLFQEDLKCWRCGETFGRHFTKLKAHLQEEYDDWLDKSVSM.

One can recognise an HIT domain in the interval 38-160 (LKVYIESPES…MTLDHVSPSL (123 aa)). Interaction with DNA stretches follow at residues 63–67 (DMFPK), 138–149 (HAGPSMNNLHLH), and 161–165 (KNSAH). Residue H147 is the Nucleophile of the active site. The Zn(2+) site is built by C200 and C203. Residues 209-212 (RHFT) form an interaction with DNA region. Zn(2+) is bound by residues H217 and E221.

As to quaternary structure, monomer.

It is found in the nucleus. Its subcellular location is the cytoplasm. It carries out the reaction a 5'-end adenosine-5'-diphospho-5'-2'-deoxyribonucleoside-DNA + H2O = a 5'-end 5'-phospho-2'-deoxyribonucleoside-DNA + AMP + 2 H(+). It catalyses the reaction a 5'-end adenosine-5'-diphospho-5'-ribonucleoside-2'-deoxyribonucleotide-DNA + H2O = a 5'-end 5'-phospho-ribonucleoside-2'-deoxyribonucleotide-DNA + AMP + 2 H(+). The catalysed reaction is a 3'-end 2'-deoxyribonucleotide-3'-diphospho-5'-guanosine-DNA + H2O = a 3'-end 2'-deoxyribonucleotide 3'-phosphate-DNA + GMP + 2 H(+). Functionally, DNA-binding protein involved in single-strand DNA break repair, double-strand DNA break repair and base excision repair. Resolves abortive DNA ligation intermediates formed either at base excision sites, or when DNA ligases attempt to repair non-ligatable breaks induced by reactive oxygen species. Catalyzes the release of adenylate groups covalently linked to 5'-phosphate termini, resulting in the production of 5'-phosphate termini that can be efficiently rejoined. Likewise, catalyzes the release of 3'-linked guanosine (DNAppG) and inosine (DNAppI) from DNA, but has higher specific activity with 5'-linked adenosine (AppDNA). This is Aprataxin-like protein (hnt3) from Schizosaccharomyces pombe (strain 972 / ATCC 24843) (Fission yeast).